Reading from the N-terminus, the 115-residue chain is Large ribosomal subunit protein bL20 (115 aa).

The protein belongs to the bacterial ribosomal protein bL20 family.

Functionally, binds directly to 23S ribosomal RNA and is necessary for the in vitro assembly process of the 50S ribosomal subunit. It is not involved in the protein synthesizing functions of that subunit. This chain is Large ribosomal subunit protein bL20, found in Chlorobium chlorochromatii (strain CaD3).